The following is a 327-amino-acid chain: Aldo-keto reductase family 1 member A1 (327 aa).

Residues 13–22 (GQKIPLIGLG), threonine 23, tryptophan 24, and aspartate 47 contribute to the NADP(+) site. Residue tyrosine 52 is the Proton donor of the active site. Positions 164, 165, 213, 215, 217, 265, 266, 267, 268, 271, 274, and 275 each coordinate NADP(+).

This sequence belongs to the aldo/keto reductase family.

Its subcellular location is the cytoplasm. The protein resides in the cytosol. It localises to the apical cell membrane. The catalysed reaction is a primary alcohol + NADP(+) = an aldehyde + NADPH + H(+). The enzyme catalyses S-nitroso-CoA + NADPH + H(+) = sulfinamide-CoA + NADP(+). It catalyses the reaction S-nitrosoglutathione + NADPH + H(+) = S-(hydroxysulfenamide)glutathione + NADP(+). Its function is as follows. Catalyzes the NADPH-dependent reduction of a wide variety of carbonyl-containing compounds to their corresponding alcohols. Displays enzymatic activity towards endogenous metabolites such as aromatic and aliphatic aldehydes, ketones, monosaccharides and bile acids. Acts as an aldehyde-detoxification enzyme. Also acts as an inhibitor of protein S-nitrosylation by mediating degradation of S-nitroso-coenzyme A (S-nitroso-CoA), a cofactor required to S-nitrosylate proteins. Also acts as a S-nitroso-glutathione reductase by catalyzing the NADPH-dependent reduction of S-nitrosoglutathione. Displays no reductase activity towards retinoids. The chain is Aldo-keto reductase family 1 member A1 (AKR1A1) from Gallus gallus (Chicken).